The following is a 32-amino-acid chain: Beta-1,4-galactosyltransferase 1 (32 aa).

Belongs to the glycosyltransferase 7 family. It depends on Mn(2+) as a cofactor. The soluble form derives from the membrane form by proteolytic processing.

It is found in the golgi apparatus. The protein localises to the golgi stack membrane. Its subcellular location is the secreted. The protein resides in the cell membrane. It localises to the cell projection. It is found in the filopodium. It carries out the reaction D-glucose + UDP-alpha-D-galactose = lactose + UDP + H(+). It catalyses the reaction an N-acetyl-beta-D-glucosaminyl derivative + UDP-alpha-D-galactose = a beta-D-galactosyl-(1-&gt;4)-N-acetyl-beta-D-glucosaminyl derivative + UDP + H(+). The catalysed reaction is N-acetyl-D-glucosamine + UDP-alpha-D-galactose = beta-D-galactosyl-(1-&gt;4)-N-acetyl-D-glucosamine + UDP + H(+). The enzyme catalyses a beta-D-GlcNAc-(1-&gt;3)-beta-D-Gal-(1-&gt;4)-beta-D-Glc-(1&lt;-&gt;1)-Cer(d18:1(4E)) + UDP-alpha-D-galactose = a neolactoside nLc4Cer(d18:1(4E)) + UDP + H(+). It carries out the reaction a beta-D-glucosylceramide + UDP-alpha-D-galactose = a beta-D-galactosyl-(1-&gt;4)-beta-D-glucosyl-(1&lt;-&gt;1)-ceramide + UDP + H(+). It catalyses the reaction a neolactoside IV(3)-beta-GlcNAc-nLc4Cer + UDP-alpha-D-galactose = a neolactoside nLc6Cer + UDP + H(+). The protein operates within protein modification; protein glycosylation. Functionally, this protein is responsible for the synthesis of complex-type N-linked oligosaccharides in many glycoproteins as well as the carbohydrate moieties of glycolipids. The polypeptide is Beta-1,4-galactosyltransferase 1 (Rattus norvegicus (Rat)).